Consider the following 311-residue polypeptide: MDTSTISRNFGYIKSKPDKRDVLITFDKKTIKTFKLTANIKPKIIDGIFDLRKIVTLPQALSEIDQGTLGSCTANAIAYAYAFAEIKQHNRNTFMPSRLFIYYNERMLENSIDEDSGAQIRTGIKTINKYGVCDEHHWVYDPLKFRVKPPIEAYEEAKVAKSVKYARIDFTKDTTIDDRIEHIKRALLSGFPIVFGFVVFESFMSQDVTKTGIVNMPKSYEQEIGGHAVCAVGFNENDKTFIVKNSWGSKWGLNGYFNMPYKYVADENLASDFWIIQEVTDPIINNFDPNDINPDAINLDVNINSGGVVHN.

It belongs to the peptidase C1 family.

This is an uncharacterized protein from Acanthamoeba polyphaga mimivirus (APMV).